The chain runs to 432 residues: MTNLLWQKPGVAVDAKIQSFLAGDDVILDREFFLYDIAASKAHAQGLQHIGILSLQELGGLSEQLDLLAADFRSGAFVLDAQYEDCHSAIEARLTERLGDAGRKIHTGRSRNDQILVATRLWLKDKLQRVATLSAEIAKVALDRAQAEAGLPVPGYTHIQRAVVSSAGMWWAGWAEAFIDNAVRADDTVRLVDSNPLGTAAGYGVNLPLDRAHTTAELGFARLLVSPIYAQLSRGKYELAALEALGSATLDLRRIAWDLSLFTSGEFAFVALPAQYTTGSSIMPNKRNPDVIELMRATHASVAAARTEIEQLLSLPSGYHRDLQSSKGAIVHGFGRGLAALELLPALLANLEWRPDKLRAAIDSGMYATDVAVEAAVAGVPFREAYKAAAQAAETAGQGRTPEGSLAARVSPGAAADLQLDVLQARWQALRA.

This sequence belongs to the lyase 1 family. Argininosuccinate lyase subfamily.

It localises to the cytoplasm. It carries out the reaction 2-(N(omega)-L-arginino)succinate = fumarate + L-arginine. It participates in amino-acid biosynthesis; L-arginine biosynthesis; L-arginine from L-ornithine and carbamoyl phosphate: step 3/3. The polypeptide is Argininosuccinate lyase (Xanthomonas euvesicatoria pv. vesicatoria (strain 85-10) (Xanthomonas campestris pv. vesicatoria)).